We begin with the raw amino-acid sequence, 350 residues long: Peptide-N(4)-(N-acetyl-beta-glucosaminyl)asparagine amidase (350 aa).

Residues Cys123, Cys126, Cys157, and Cys160 each contribute to the Zn(2+) site. Residue Cys183 is the Nucleophile of the active site. Active-site residues include His210 and Asp227. Position 230 (Glu230) interacts with substrate. A disordered region spans residues 324–350 (EIPPAAGAAGRQSGSADWKRQRGEDGR). Residues 340–350 (DWKRQRGEDGR) are compositionally biased toward basic and acidic residues.

The protein belongs to the transglutaminase-like superfamily. PNGase family. Zn(2+) serves as cofactor.

It localises to the cytoplasm. The catalysed reaction is Hydrolysis of an N(4)-(acetyl-beta-D-glucosaminyl)asparagine residue in which the glucosamine residue may be further glycosylated, to yield a (substituted) N-acetyl-beta-D-glucosaminylamine and a peptide containing an aspartate residue.. In terms of biological role, specifically deglycosylates the denatured form of N-linked glycoproteins in the cytoplasm and assists their proteasome-mediated degradation. Cleaves the beta-aspartyl-glucosamine (GlcNAc) of the glycan and the amide side chain of Asn, converting Asn to Asp. Prefers proteins containing high-mannose over those bearing complex type oligosaccharides. Can recognize misfolded proteins in the endoplasmic reticulum that are exported to the cytosol to be destroyed and deglycosylate them, while it has no activity toward native proteins. Deglycosylation is a prerequisite for subsequent proteasome-mediated degradation of some, but not all, misfolded glycoproteins. This is Peptide-N(4)-(N-acetyl-beta-glucosaminyl)asparagine amidase (PNG1) from Eremothecium gossypii (strain ATCC 10895 / CBS 109.51 / FGSC 9923 / NRRL Y-1056) (Yeast).